The sequence spans 265 residues: Short-chain dehydrogenase/reductase GME11373 (265 aa).

NADP(+) is bound by residues isoleucine 26, aspartate 72, asparagine 99, and arginine 132. Active-site proton donor residues include serine 148 and serine 149. NADP(+) is bound by residues tyrosine 163, lysine 167, and threonine 198. Catalysis depends on tyrosine 163, which acts as the Proton acceptor. The Lowers pKa of active site Tyr role is filled by lysine 167.

The protein belongs to the short-chain dehydrogenases/reductases (SDR) family.

It functions in the pathway secondary metabolite biosynthesis. Its function is as follows. Short-chain dehydrogenase/reductase; part of the gene cluster that mediates the biosynthesis of dibenzodioxocinones such as pestalotiollide B, a novel class of inhibitors against cholesterol ester transfer protein (CEPT). The biosynthesis initiates from condensation of acetate and malonate units catalyzed by the non-reducing PKS pks8/GME11356. Pks8/GME11356 lacks a thioesterase (TE) domain, which is important to the cyclizing of the third ring of atrochrysone carboxylic acid, and the esterase GME11355 might play the role of TE and catalyzes the cyclization reaction of the C ring. The lactamase-like protein GME11357 (or other beta-lactamases in Pestalotiopsis microspora) probably hydrolyzes the thioester bond between the ACP of pks8/GME11356 and the intermediate to release atrochrysone carboxylic acid, which is spontaneously dehydrates to form endocrocin anthrone. Endocrocin anthrone is further converted to emodin via the endocrocin intermediate. Emodin is then oxidized by several enzymes such as the Baeyer-Villiger oxidase GME11358, the oxidoreductase GME11367, the short chain dehydrogenase/reductase GME11373, as well as by other oxidoreductases from the cluster, to modify the A and C rings and open the B ring, and finally yield monodictyphenone. The prenyltransferase GME11375 may catalyze the addition reaction between the C5 side chains and the carbon bone of dibenzodioxocinones. The remaining biochemical reactions to the final product dibenzodioxocinones should be methylation catalyzed by methyltransferase GME11366 and reduction and lactonization reaction catalyzed by a series of oxidordeuctases. The chain is Short-chain dehydrogenase/reductase GME11373 from Pestalotiopsis microspora.